The following is a 435-amino-acid chain: 26S proteasome regulatory subunit 7 (435 aa).

Over residues 1 to 23 (MPDHLGDDMRKTKKDDTKEEEKN) the composition is skewed to basic and acidic residues. The disordered stretch occupies residues 1 to 24 (MPDHLGDDMRKTKKDDTKEEEKNF). 218–225 (GPPGTGKT) contacts ATP.

Belongs to the AAA ATPase family.

The protein localises to the cytoplasm. Its subcellular location is the nucleus. Its function is as follows. The 26S proteasome is involved in the ATP-dependent degradation of ubiquitinated proteins. The regulatory (or ATPase) complex confers ATP dependency and substrate specificity to the 26S complex. In Caenorhabditis elegans, this protein is 26S proteasome regulatory subunit 7 (rpt-1).